The sequence spans 273 residues: 4-hydroxy-tetrahydrodipicolinate reductase (273 aa).

Residues 8 to 13, E34, 102 to 104, and 128 to 131 contribute to the NAD(+) site; these read GACGRM, GTT, and APNM. Residue H160 is the Proton donor/acceptor of the active site. A (S)-2,3,4,5-tetrahydrodipicolinate-binding site is contributed by H161. Residue K164 is the Proton donor of the active site. Position 170-171 (170-171) interacts with (S)-2,3,4,5-tetrahydrodipicolinate; the sequence is GT.

It belongs to the DapB family.

It localises to the cytoplasm. The enzyme catalyses (S)-2,3,4,5-tetrahydrodipicolinate + NAD(+) + H2O = (2S,4S)-4-hydroxy-2,3,4,5-tetrahydrodipicolinate + NADH + H(+). It catalyses the reaction (S)-2,3,4,5-tetrahydrodipicolinate + NADP(+) + H2O = (2S,4S)-4-hydroxy-2,3,4,5-tetrahydrodipicolinate + NADPH + H(+). Its pathway is amino-acid biosynthesis; L-lysine biosynthesis via DAP pathway; (S)-tetrahydrodipicolinate from L-aspartate: step 4/4. In terms of biological role, catalyzes the conversion of 4-hydroxy-tetrahydrodipicolinate (HTPA) to tetrahydrodipicolinate. This is 4-hydroxy-tetrahydrodipicolinate reductase from Methanothermobacter thermautotrophicus (strain ATCC 29096 / DSM 1053 / JCM 10044 / NBRC 100330 / Delta H) (Methanobacterium thermoautotrophicum).